We begin with the raw amino-acid sequence, 275 residues long: Peflin (275 aa).

Repeat copies occupy residues 21 to 29 (PPGGYYPGP), 31 to 39 (HGGGQYGSG), 41 to 49 (PPGGGYGAP), 50 to 59 (APGGPYGYPS), 60 to 68 (AGGVPSGTP), 76 to 84 (PPGGPYGQL), 85 to 91 (PPGGPYG), and 92 to 100 (TQPGHYGQG). Disordered stretches follow at residues 21 to 45 (PPGGYYPGPPHGGGQYGSGLPPGGG) and 59 to 103 (SAGG…GGVP). The tract at residues 21-100 (PPGGYYPGPP…GTQPGHYGQG (80 aa)) is 8 X 9 AA approximate tandem repeat of [AP]-P-G-G-P-Y-G-G-P-P. Over residues 31–45 (HGGGQYGSGLPPGGG) the composition is skewed to gly residues. Positions 59–70 (SAGGVPSGTPSG) are enriched in low complexity. EF-hand domains are found at residues 105-140 (NVDPEAYSWFQSVDADHSGYISLKELKQALVNSNWS), 146-174 (TCLMMINMFDKTKSGRIDVAGFSALWKFL), 172-207 (KFLQQWRNLFQQYDRDRSGSISSTELQQALSQMGYN), 208-244 (LSPQFTQLLVSRYCARSAIPAMQLDCFIKVCTQLQVL), and 245-274 (TEAFREKDTAVQGNIRLSFEDFVTMTASRM). Residues Asp118, Asp120, Ser122, Tyr124, and Glu129 each contribute to the Ca(2+) site. Residues Asp185, Asp187, Ser189, Ser191, and Glu196 each contribute to the Ca(2+) site. The tract at residues 195–275 (TELQQALSQM…FVTMTASRML (81 aa)) is required for interaction with PDCD6.

As to quaternary structure, heterodimer; heterodimerizes (via the EF-hand 5) with PDCD6. Dissociates from PDCD6 in presence of calcium. Ubiquitinated by the BCR(KLHL12) E3 ubiquitin ligase complex.

The protein localises to the cytoplasm. It localises to the endoplasmic reticulum. Its subcellular location is the membrane. The protein resides in the cytoplasmic vesicle. It is found in the COPII-coated vesicle membrane. Its function is as follows. Calcium-binding protein that acts as an adapter that bridges unrelated proteins or stabilizes weak protein-protein complexes in response to calcium. Together with PDCD6, acts as a calcium-dependent adapter for the BCR(KLHL12) complex, a complex involved in endoplasmic reticulum (ER)-Golgi transport by regulating the size of COPII coats. In response to cytosolic calcium increase, the heterodimer formed with PDCD6 interacts with, and bridges together the BCR(KLHL12) complex and SEC31 (SEC31A or SEC31B), promoting monoubiquitination of SEC31 and subsequent collagen export, which is required for neural crest specification. Its role in the heterodimer formed with PDCD6 is however unclear: some evidence shows that PEF1 and PDCD6 work together and promote association between PDCD6 and SEC31 in presence of calcium. Other reports show that PEF1 dissociates from PDCD6 in presence of calcium, and may act as a negative regulator of PDCD6. Also acts as a negative regulator of ER-Golgi transport; possibly by inhibiting interaction between PDCD6 and SEC31. The chain is Peflin from Mus musculus (Mouse).